Reading from the N-terminus, the 354-residue chain is tRNA N6-adenosine threonylcarbamoyltransferase (354 aa).

Fe cation contacts are provided by His111 and His115. Substrate is bound by residues 134–138 (LVSGG), Asp167, Gly180, and Asn279. Asp319 is a binding site for Fe cation.

The protein belongs to the KAE1 / TsaD family. The cofactor is Fe(2+).

It localises to the cytoplasm. It catalyses the reaction L-threonylcarbamoyladenylate + adenosine(37) in tRNA = N(6)-L-threonylcarbamoyladenosine(37) in tRNA + AMP + H(+). Required for the formation of a threonylcarbamoyl group on adenosine at position 37 (t(6)A37) in tRNAs that read codons beginning with adenine. Is involved in the transfer of the threonylcarbamoyl moiety of threonylcarbamoyl-AMP (TC-AMP) to the N6 group of A37, together with TsaE and TsaB. TsaD likely plays a direct catalytic role in this reaction. This chain is tRNA N6-adenosine threonylcarbamoyltransferase, found in Neisseria meningitidis serogroup B (strain ATCC BAA-335 / MC58).